A 102-amino-acid chain; its full sequence is MAGQKIRIRLKSYDHSVIDSSARKIVDTVTRAGATVVGPVPLPTEKNVICVIRSPHKYKDSREHFEMRTHKRLIDIVDPTPKAVDSLMRLDLPADVNIEIKL.

Belongs to the universal ribosomal protein uS10 family. As to quaternary structure, part of the 30S ribosomal subunit.

Functionally, involved in the binding of tRNA to the ribosomes. This is Small ribosomal subunit protein uS10 from Clavibacter michiganensis subsp. michiganensis (strain NCPPB 382).